The primary structure comprises 628 residues: 1-deoxy-D-xylulose-5-phosphate synthase (628 aa).

Thiamine diphosphate contacts are provided by residues His72 and 113–115 (GHS). Asp144 serves as a coordination point for Mg(2+). Residues 145–146 (GA), Asn173, Tyr284, and Glu366 each bind thiamine diphosphate. A Mg(2+)-binding site is contributed by Asn173.

This sequence belongs to the transketolase family. DXPS subfamily. In terms of assembly, homodimer. Mg(2+) serves as cofactor. Thiamine diphosphate is required as a cofactor.

The catalysed reaction is D-glyceraldehyde 3-phosphate + pyruvate + H(+) = 1-deoxy-D-xylulose 5-phosphate + CO2. It functions in the pathway metabolic intermediate biosynthesis; 1-deoxy-D-xylulose 5-phosphate biosynthesis; 1-deoxy-D-xylulose 5-phosphate from D-glyceraldehyde 3-phosphate and pyruvate: step 1/1. Its function is as follows. Catalyzes the acyloin condensation reaction between C atoms 2 and 3 of pyruvate and glyceraldehyde 3-phosphate to yield 1-deoxy-D-xylulose-5-phosphate (DXP). This Shouchella clausii (strain KSM-K16) (Alkalihalobacillus clausii) protein is 1-deoxy-D-xylulose-5-phosphate synthase.